Consider the following 1020-residue polypeptide: Probable beta-galactosidase B (1020 aa).

Positions 1-22 (MLISKTVLSGLALGASFVGVSA) are cleaved as a signal peptide. Residue asparagine 25 is glycosylated (N-linked (GlcNAc...) asparagine). Residue tyrosine 90 participates in substrate binding. Asparagine 111 carries an N-linked (GlcNAc...) asparagine glycan. The substrate site is built by asparagine 135, alanine 136, and glutamate 137. Asparagine 172 is a glycosylation site (N-linked (GlcNAc...) asparagine). Asparagine 195 is a binding site for substrate. Residue glutamate 196 is the Proton donor of the active site. Residues asparagine 210 and asparagine 251 are each glycosylated (N-linked (GlcNAc...) asparagine). Residue tyrosine 264 participates in substrate binding. Cysteine 270 and cysteine 323 are disulfide-bonded. An N-linked (GlcNAc...) asparagine glycan is attached at asparagine 271. The Nucleophile role is filled by glutamate 307. Tyrosine 372 contributes to the substrate binding site. Asparagine 410, asparagine 455, asparagine 549, asparagine 596, asparagine 625, asparagine 702, asparagine 747, asparagine 785, asparagine 819, asparagine 880, and asparagine 919 each carry an N-linked (GlcNAc...) asparagine glycan.

It belongs to the glycosyl hydrolase 35 family.

It is found in the secreted. It catalyses the reaction Hydrolysis of terminal non-reducing beta-D-galactose residues in beta-D-galactosides.. Its function is as follows. Cleaves beta-linked terminal galactosyl residues from gangliosides, glycoproteins, and glycosaminoglycans. The polypeptide is Probable beta-galactosidase B (lacB) (Aspergillus flavus (strain ATCC 200026 / FGSC A1120 / IAM 13836 / NRRL 3357 / JCM 12722 / SRRC 167)).